A 94-amino-acid chain; its full sequence is Large ribosomal subunit protein uL23 (94 aa).

The protein belongs to the universal ribosomal protein uL23 family. In terms of assembly, part of the 50S ribosomal subunit. Contacts protein L29, and trigger factor when it is bound to the ribosome.

In terms of biological role, one of the early assembly proteins it binds 23S rRNA. One of the proteins that surrounds the polypeptide exit tunnel on the outside of the ribosome. Forms the main docking site for trigger factor binding to the ribosome. The polypeptide is Large ribosomal subunit protein uL23 (Exiguobacterium sibiricum (strain DSM 17290 / CCUG 55495 / CIP 109462 / JCM 13490 / 255-15)).